The sequence spans 564 residues: Septation ring formation regulator EzrA (564 aa).

Topologically, residues 1-4 (MVLY) are extracellular. The helical transmembrane segment at 5-23 (IILAIIVIILIAVGVLFYL) threads the bilayer. Topologically, residues 24–564 (RSNKRQIIEK…KHIEEEVIKQ (541 aa)) are cytoplasmic. Coiled-coil stretches lie at residues 99–138 (SFNA…YKDN), 190–223 (DGNY…LIRE), 271–300 (LISR…LIEH), 350–435 (VRQF…RRLL), and 471–550 (VKQL…ESVE).

Belongs to the EzrA family.

The protein resides in the cell membrane. Its function is as follows. Negative regulator of FtsZ ring formation; modulates the frequency and position of FtsZ ring formation. Inhibits FtsZ ring formation at polar sites. Interacts either with FtsZ or with one of its binding partners to promote depolymerization. The chain is Septation ring formation regulator EzrA from Staphylococcus aureus (strain JH1).